An 88-amino-acid chain; its full sequence is uncharacterized protein (88 aa).

To E.coli YihD.

This is an uncharacterized protein from Haemophilus influenzae (strain ATCC 51907 / DSM 11121 / KW20 / Rd).